The chain runs to 245 residues: 8-amino-3,8-dideoxy-manno-octulosonate cytidylyltransferase (245 aa).

This sequence belongs to the KdsB family.

It is found in the cytoplasm. The enzyme catalyses 8-amino-3,8-dideoxy-alpha-D-manno-octulosonate + CTP = CMP-8-amino-3,8-dideoxy-alpha-D-manno-oct-2-ulosonate + diphosphate. The protein operates within bacterial outer membrane biogenesis; lipopolysaccharide biosynthesis. Functionally, activates KDO8N (a required 8-carbon sugar) for incorporation into bacterial lipopolysaccharide in the Shewanella genus. This Shewanella piezotolerans (strain WP3 / JCM 13877) protein is 8-amino-3,8-dideoxy-manno-octulosonate cytidylyltransferase.